The sequence spans 367 residues: Ferrochelatase (367 aa).

The Fe cation site is built by H213 and E294.

The protein belongs to the ferrochelatase family.

Its subcellular location is the cytoplasm. It catalyses the reaction heme b + 2 H(+) = protoporphyrin IX + Fe(2+). It functions in the pathway porphyrin-containing compound metabolism; protoheme biosynthesis; protoheme from protoporphyrin-IX: step 1/1. In terms of biological role, catalyzes the ferrous insertion into protoporphyrin IX. The polypeptide is Ferrochelatase (Dechloromonas aromatica (strain RCB)).